Consider the following 206-residue polypeptide: Small ribosomal subunit protein uS4 (206 aa).

The 63-residue stretch at 94 to 156 folds into the S4 RNA-binding domain; sequence RRLDNVVYRL…SRRRMYFKNL (63 aa).

This sequence belongs to the universal ribosomal protein uS4 family. Part of the 30S ribosomal subunit. Contacts protein S5. The interaction surface between S4 and S5 is involved in control of translational fidelity.

In terms of biological role, one of the primary rRNA binding proteins, it binds directly to 16S rRNA where it nucleates assembly of the body of the 30S subunit. Functionally, with S5 and S12 plays an important role in translational accuracy. The polypeptide is Small ribosomal subunit protein uS4 (Roseiflexus castenholzii (strain DSM 13941 / HLO8)).